The primary structure comprises 1098 residues: Probable arabinosyltransferase B (1098 aa).

The next 12 membrane-spanning stretches (helical) occupy residues 28–50, 217–239, 271–293, 402–419, 434–456, 472–494, 541–558, 570–587, 597–619, 626–648, 663–685, and 698–720; these read WVAT…LPVV, LKLL…LWRL, ASWR…WHVI, LRPE…YVLI, AVVT…AALV, LVGT…TVVF, FGFL…FIML, PAWR…FLMF, GLFA…PSVL, MAFL…GWWY, IDGI…YAAW, and LIRA…VFVA.

It belongs to the emb family.

Its subcellular location is the cell membrane. Its function is as follows. Arabinosyl transferase responsible for the polymerization of arabinose into the arabinan of arabinogalactan. This Mycobacterium bovis (strain ATCC BAA-935 / AF2122/97) protein is Probable arabinosyltransferase B (embB).